Here is a 99-residue protein sequence, read N- to C-terminus: MVLRRLLAALLHSPQLVERLSESRPIRRAAQLTAFALLQAQLRGQDAARRLQDLAAGPVGSLCRRAERFRDAFTQELRRGLRGRSGPPPGSQRGPGANI.

The disordered stretch occupies residues 76–99 (ELRRGLRGRSGPPPGSQRGPGANI).

The polypeptide is Protein NCBP2AS2 (Homo sapiens (Human)).